Reading from the N-terminus, the 774-residue chain is Probable ubiquitin-like-specific protease 2A (774 aa).

The segment at 118–141 (SSLSENDEVSTGEATNPASDPHEV) is disordered. Catalysis depends on residues His400, Asp430, and Cys485. The tract at residues 548 to 568 (ILPANSKSEPPHCGVSNRNDQ) is disordered.

This sequence belongs to the peptidase C48 family.

Functionally, protease that catalyzes two essential functions in the SUMO pathway: processing of full-length SUMOs to their mature forms and deconjugation of SUMO from targeted proteins. The polypeptide is Probable ubiquitin-like-specific protease 2A (ULP2A) (Arabidopsis thaliana (Mouse-ear cress)).